The primary structure comprises 311 residues: AT-hook motif nuclear-localized protein 27 (311 aa).

Residues 40–105 (HHHQHQQHQQ…KNKAKPPIIV (66 aa)) form a disordered region. The span at 55–75 (DDSRESDHSNKDHHQQGRPDS) shows a compositional bias: basic and acidic residues. Positions 86 to 98 (KRPRGRPPGSKNK) form a DNA-binding region, a.T hook. The PPC domain maps to 110-258 (PNALRSHVLE…EEGGGGGGGG (149 aa)). Residues 178–183 (GRFEIL) are required for the binding to non-AHL interactors. Residues 246-311 (EEEEEGGGGG…GAGTPSRPPF (66 aa)) are disordered. Residues 252-262 (GGGGGGGGGGP) are compositionally biased toward gly residues. A compositionally biased stretch (low complexity) spans 263–277 (PQMQQAPSASPPSGV). The span at 278-292 (TGQGQLGGNVGGYGF) shows a compositional bias: gly residues.

In terms of assembly, homodimer. Interacts with AHL12, AHL25, AHL29, TCP4, TCP13, EF114, ATAF2/NAC081, histone H2B.1, histone H3.3 and histone H4. As to expression, expressed in the hypocotyl and the vascular tissue of seedling.

The protein resides in the nucleus. Transcription factor that specifically binds AT-rich DNA sequences related to the nuclear matrix attachment regions (MARs). Negatively regulates plant innate immunity (PTI) to pathogens through the down-regulation of the PAMP-triggered FRK1 expression. Acts redundantly with AHL18, AHL22 and AHL29 in the regulation of flowering and regulation of the hypocotyl elongation. Acts as a chromatin remodeling factor that negatively regulates the leaf senescence. Acts redundantly with AHL29/SOB3 to modulate hypocotyl growth inhibition in response to light. The protein is AT-hook motif nuclear-localized protein 27 of Arabidopsis thaliana (Mouse-ear cress).